A 362-amino-acid polypeptide reads, in one-letter code: MNQTIFNFSAGPAVLPHVVLEQVQAELLDWHGSGMSVMEMSHRGPEFMKIAAEAEQDLRDLLDIPANYKILFLQGGATLQFAMVPLNLMRGHGKASYVQTGIWSKKAIAEARRFTAVEIAASNEDRHASYVPMQADWQVSPDTAYVHITGNETIGGVEFDFIPDLGDIPLVSDASSHILSKPTDVSRFGLIYAGAQKNIGPAGLTLVIVRDDLLGHAPANTATMLDYAVYAKEESMHNTPPTFAIYVAGLVFKWLKQLGGLERMAEINARKARLLYDAIDESRGFYANPVETRNRSRMNVPFTLADAAMDEAFLKGARSHGLIQLKGHRSVGGMRASIYNAMPEAGVQILADYLRDFARQHG.

L-glutamate is bound at residue Arg43. Residues 77–78, Trp103, Thr153, Asp173, and Gln196 each bind pyridoxal 5'-phosphate; that span reads AT. N6-(pyridoxal phosphate)lysine is present on Lys197. 238-239 contributes to the pyridoxal 5'-phosphate binding site; it reads NT.

It belongs to the class-V pyridoxal-phosphate-dependent aminotransferase family. SerC subfamily. As to quaternary structure, homodimer. Pyridoxal 5'-phosphate serves as cofactor.

The protein resides in the cytoplasm. It carries out the reaction O-phospho-L-serine + 2-oxoglutarate = 3-phosphooxypyruvate + L-glutamate. It catalyses the reaction 4-(phosphooxy)-L-threonine + 2-oxoglutarate = (R)-3-hydroxy-2-oxo-4-phosphooxybutanoate + L-glutamate. Its pathway is amino-acid biosynthesis; L-serine biosynthesis; L-serine from 3-phospho-D-glycerate: step 2/3. It participates in cofactor biosynthesis; pyridoxine 5'-phosphate biosynthesis; pyridoxine 5'-phosphate from D-erythrose 4-phosphate: step 3/5. Catalyzes the reversible conversion of 3-phosphohydroxypyruvate to phosphoserine and of 3-hydroxy-2-oxo-4-phosphonooxybutanoate to phosphohydroxythreonine. The chain is Phosphoserine aminotransferase from Acidithiobacillus ferrooxidans (strain ATCC 23270 / DSM 14882 / CIP 104768 / NCIMB 8455) (Ferrobacillus ferrooxidans (strain ATCC 23270)).